Here is a 520-residue protein sequence, read N- to C-terminus: AMP-binding domain-containing enzyme iboA (520 aa).

180-191 (LTSGSTSGSPKV) is a binding site for ATP. The FACS motif lies at 397-447 (DGNFHTGDLFEKQLDGSYLFRGRGDDWIKSEDSRFIDTKAIEEKINDVCSD).

This sequence belongs to the ATP-dependent AMP-binding enzyme family. It depends on Mg(2+) as a cofactor.

It functions in the pathway secondary metabolite biosynthesis. Functionally, AMP-binding domain-containing enzyme; part of the gene cluster that mediates the biosynthesis of the psychoactive metabolites ibotenic acid and muscimol. The first committed step is glutamate hydroxylation by the 2-oxoglutarate-dependent dioxygenase iboH, and the last step is decarboxylation of ibotenic acid to muscimol by the decarboxylase iboD. The order of the intermediate reactions is somewhat ambiguous. IboA likely activates the carboxylic acid at position 5 to introduce an amide bond, and the flavin monooxygenase iboF generates the N-O bond. There are several options for the latter step. One option is that iboF directly hydroxylates the amide nitrogen formed by iboA to produce a hydroxamic acid species. Another option is that iboF hydroxylates an external N-containing compound, whose resulting N-O bond is subsequently introduced into the hydroxyglutamate scaffold. The paralogous PLP-dependent cystathionine gamma-synthase-like enzymes iboG1 and iboG2 are likely involved in substitution of the OH group at position 3 by the O-N moiety. The first cyclic intermediate is most probably tricholomic acid which is likely desaturated to ibotenic acid by the cytochrome P450 monooxygenase iboC. The protein is AMP-binding domain-containing enzyme iboA of Amanita muscaria (strain Koide BX008).